The primary structure comprises 344 residues: Melanocyte-stimulating hormone receptor (344 aa).

Residues 1 to 37 are Extracellular-facing; the sequence is MPMQGAQRKLLGSLNSTPTATSNPGLAANHTGAPCLE. The N-linked (GlcNAc...) asparagine glycan is linked to N29. The helical transmembrane segment at 38 to 63 threads the bilayer; sequence VSIPDGLFLSLGLVSLVENVLVVAAI. Over 64-72 the chain is Cytoplasmic; the sequence is AKNRNLHSS. The chain crosses the membrane as a helical span at residues 73-93; sequence MYXFICCLALSDLLVSGSNML. The Extracellular segment spans residues 94 to 118; it reads ETAIILLLEAGTLATRASVVQQLHN. A helical transmembrane segment spans residues 119-140; that stretch reads TIDVLTCSSMLCSLCFLGAIAV. Residues 141–163 lie on the Cytoplasmic side of the membrane; it reads DRYISIFYALRYHSIMTLPRAQR. Residues 164 to 183 form a helical membrane-spanning segment; it reads AIAAIWVASVLSSTLFITYY. Over 184–191 the chain is Extracellular; sequence DHAAVLLC. A helical membrane pass occupies residues 192-211; sequence LVVFFLAMLVLMAVLYVHML. Topologically, residues 212–240 are cytoplasmic; that stretch reads ARACQHAQGIIRLHNRQLPAHKGFGLRGA. A helical transmembrane segment spans residues 241-266; that stretch reads ATLTILLGIFFLCWGPFFLHLTLVVF. At 267–279 the chain is on the extracellular side; that stretch reads CPQHLTCNCIFKN. A helical transmembrane segment spans residues 280–300; that stretch reads FKVFLTLIICNTIIDPLIYAF. Residues 301–344 lie on the Cytoplasmic side of the membrane; it reads RSQELRRTLKEVLLCSSWPGCWAEGGGDSVWPGSCVTLRGPLPP. C315 is lipidated: S-palmitoyl cysteine.

The protein belongs to the G-protein coupled receptor 1 family. In terms of assembly, interacts with MGRN1, but does not undergo MGRN1-mediated ubiquitination; this interaction competes with GNAS-binding and thus inhibits agonist-induced cAMP production. Interacts with OPN3; the interaction results in a decrease in MC1R-mediated cAMP signaling and ultimately a decrease in melanin production in melanocytes.

It localises to the cell membrane. Receptor for MSH (alpha, beta and gamma) and ACTH. The activity of this receptor is mediated by G proteins which activate adenylate cyclase. Mediates melanogenesis, the production of eumelanin (black/brown) and phaeomelanin (red/yellow), via regulation of cAMP signaling in melanocytes. The chain is Melanocyte-stimulating hormone receptor (MC1R) from Callithrix geoffroyi (Geoffroy's marmoset).